We begin with the raw amino-acid sequence, 57 residues long: Large ribosomal subunit protein bL32c (57 aa).

The protein belongs to the bacterial ribosomal protein bL32 family.

Its subcellular location is the plastid. It localises to the chloroplast. This chain is Large ribosomal subunit protein bL32c, found in Amborella trichopoda.